Reading from the N-terminus, the 1203-residue chain is Protein patched homolog 2 (1203 aa).

The Cytoplasmic segment spans residues methionine 1–lysine 57. A helical membrane pass occupies residues valine 58–isoleucine 78. At glutamate 79–glutamate 392 the chain is on the extracellular side. An N-linked (GlcNAc...) asparagine glycan is attached at asparagine 370. Residues valine 393–methionine 413 traverse the membrane as a helical segment. Residues serine 394–leucine 552 enclose the SSD domain. The Cytoplasmic segment spans residues leucine 414 to alanine 428. Residues glycine 429–isoleucine 449 traverse the membrane as a helical segment. The Extracellular segment spans residues threonine 450–glutamine 457. The chain crosses the membrane as a helical span at residues valine 458 to phenylalanine 478. Topologically, residues threonine 479–serine 501 are cytoplasmic. A helical membrane pass occupies residues valine 502–proline 522. At alanine 523–alanine 531 the chain is on the extracellular side. The chain crosses the membrane as a helical span at residues alanine 532–leucine 552. The Cytoplasmic segment spans residues aspartate 553–lysine 686. Residues alanine 687–valine 707 form a helical membrane-spanning segment. Over glutamine 708–cysteine 963 the chain is Extracellular. Asparagine 812 carries an N-linked (GlcNAc...) asparagine glycan. A helical transmembrane segment spans residues phenylalanine 964–leucine 984. The Cytoplasmic segment spans residues asparagine 985–leucine 991. The chain crosses the membrane as a helical span at residues isoleucine 992 to isoleucine 1012. Residue lysine 1013 is a topological domain, extracellular. The helical transmembrane segment at leucine 1014 to valine 1034 threads the bilayer. Over histidine 1035 to aspartate 1064 the chain is Cytoplasmic. Residues glycine 1065–valine 1085 traverse the membrane as a helical segment. Residues arginine 1086 to threonine 1093 lie on the Extracellular side of the membrane. A helical membrane pass occupies residues valine 1094 to leucine 1114. Topologically, residues glycine 1115–glycine 1203 are cytoplasmic. The disordered stretch occupies residues glycine 1171–glycine 1203. A compositionally biased stretch (polar residues) spans alanine 1186–serine 1195.

This sequence belongs to the patched family.

It localises to the membrane. Functionally, plays a role in the control of cellular growth. May have a role in epidermal development. May act as a receptor for Sonic hedgehog (SHH). This chain is Protein patched homolog 2 (PTCH2), found in Homo sapiens (Human).